The sequence spans 110 residues: Integration host factor subunit alpha (110 aa).

This sequence belongs to the bacterial histone-like protein family. Heterodimer of an alpha and a beta chain.

Its function is as follows. This protein is one of the two subunits of integration host factor, a specific DNA-binding protein that functions in genetic recombination as well as in transcriptional and translational control. This Methylococcus capsulatus (strain ATCC 33009 / NCIMB 11132 / Bath) protein is Integration host factor subunit alpha.